Here is a 125-residue protein sequence, read N- to C-terminus: Large ribosomal subunit protein bL12 (125 aa).

It belongs to the bacterial ribosomal protein bL12 family. Homodimer. Part of the ribosomal stalk of the 50S ribosomal subunit. Forms a multimeric L10(L12)X complex, where L10 forms an elongated spine to which 2 to 4 L12 dimers bind in a sequential fashion. Binds GTP-bound translation factors.

Functionally, forms part of the ribosomal stalk which helps the ribosome interact with GTP-bound translation factors. Is thus essential for accurate translation. This Paraburkholderia phymatum (strain DSM 17167 / CIP 108236 / LMG 21445 / STM815) (Burkholderia phymatum) protein is Large ribosomal subunit protein bL12.